The primary structure comprises 367 residues: AA9 family lytic polysaccharide monooxygenase A (367 aa).

The first 20 residues, 1–20 (MKSSTFGMLALAAAAKLVSA), serve as a signal peptide directing secretion. Position 21 (histidine 21) interacts with Cu(2+). The interval 37-56 (GNSESGYIRSPPSNSPITDV) is disordered. Cysteine 63 and cysteine 183 are oxidised to a cystine. A Cu(2+)-binding site is contributed by histidine 102. O2 is bound at residue histidine 169. Tyrosine 180 is a Cu(2+) binding site. A disordered region spans residues 234-287 (GASGSSSSPSASASASAPAATSAAPAPSSFTTIAKQPATSSTEAPSTENTSTTS). Low complexity-rich tracts occupy residues 235 to 262 (ASGS…APSS) and 270 to 287 (PATS…STTS). A glycan (N-linked (GlcNAc...) asparagine) is linked at asparagine 282. A CBM1 domain is found at 329 to 365 (GAVKEWYQCGGLNYKGSTQCEEGLTCKKWNPYYYQCI).

The protein belongs to the polysaccharide monooxygenase AA9 family. Cu(2+) serves as cofactor.

It localises to the secreted. The enzyme catalyses [(1-&gt;4)-beta-D-glucosyl]n+m + reduced acceptor + O2 = 4-dehydro-beta-D-glucosyl-[(1-&gt;4)-beta-D-glucosyl]n-1 + [(1-&gt;4)-beta-D-glucosyl]m + acceptor + H2O.. Functionally, lytic polysaccharide monooxygenase (LPMO) that depolymerizes crystalline and amorphous polysaccharides via the oxidation of scissile alpha- or beta-(1-4)-glycosidic bonds, yielding C4 oxidation products. Catalysis by LPMOs requires the reduction of the active-site copper from Cu(II) to Cu(I) by a reducing agent and H(2)O(2) or O(2) as a cosubstrate. Active on cellulose and cello-oligosaccharides, as well as plant cell wall-derived hemicellulosic polysaccharides. Also active on cello-oligosaccharides such as cellohexaose, cellopentaose or cellotetraose. The protein is AA9 family lytic polysaccharide monooxygenase A of Aspergillus oryzae (strain ATCC 42149 / RIB 40) (Yellow koji mold).